Reading from the N-terminus, the 62-residue chain is MARSRRHSRSRSRSRNQCQRRRRRTYNRRRTMREKPRHSRRRRVRRRGCSCRRCSRRRRRRC.

The tract at residues M1–C62 is disordered.

This sequence belongs to the protamine P1 family. In terms of tissue distribution, testis.

The protein localises to the nucleus. Its subcellular location is the chromosome. Protamines substitute for histones in the chromatin of sperm during the haploid phase of spermatogenesis. They compact sperm DNA into a highly condensed, stable and inactive complex. The sequence is that of Sperm protamine P1 (PRM1) from Planigale ingrami (Long-tailed planigale).